Here is a 443-residue protein sequence, read N- to C-terminus: UDP-N-acetylmuramate--L-alanine ligase (443 aa).

Residue 111 to 117 (GAHGKTS) participates in ATP binding.

Belongs to the MurCDEF family.

It localises to the cytoplasm. It catalyses the reaction UDP-N-acetyl-alpha-D-muramate + L-alanine + ATP = UDP-N-acetyl-alpha-D-muramoyl-L-alanine + ADP + phosphate + H(+). Its pathway is cell wall biogenesis; peptidoglycan biosynthesis. In terms of biological role, cell wall formation. This is UDP-N-acetylmuramate--L-alanine ligase from Ligilactobacillus salivarius (strain UCC118) (Lactobacillus salivarius).